Here is a 549-residue protein sequence, read N- to C-terminus: Cation/acetate symporter ActP (549 aa).

13 helical membrane-spanning segments follow: residues 33 to 53 (WQAIIMFLIFVVFTLGITYWA), 77 to 97 (LAIAGDYMSAASFLGISALVF), 103 to 123 (GLIYSLGFLVGWPIILFLIAE), 148 to 168 (ILSACGSLVVVALYLIAQMVG), 183 to 203 (IAVVLVGVLMMMYVLFGGMLA), 206 to 226 (WVQIIKAVLLLFGASFMAFMV), 262 to 282 (ISALSLGLGLMFGTAGLPHIL), 303 to 323 (GFMGYFYILTFIIGFGAIMLV), 355 to 375 (LFLGFISAVAFATILAVVAGL), 404 to 424 (VSKITVLILGVIAIILGVLFE), 428 to 448 (IAFMVGLAFAIAASCNFPIIL), 464 to 484 (GGWLGLITAVVLMILGPTIWV), and 493 to 513 (IFPYEYPALFSISVAFLGIWL).

The protein belongs to the sodium:solute symporter (SSF) (TC 2.A.21) family.

Its subcellular location is the cell inner membrane. Transports acetate. The sequence is that of Cation/acetate symporter ActP from Escherichia coli O1:K1 / APEC.